We begin with the raw amino-acid sequence, 384 residues long: uncharacterized protein (384 aa).

Transmembrane regions (helical) follow at residues 11-31, 33-53, 66-86, 94-114, 153-173, 197-217, 224-244, 284-304, 309-329, and 342-362; these read LWFIAISAAGGFILSLTGISI, WMIGTLIVACCLAMIRPAWLM, LALGQMILGIELGQKLNLSVL, FSVGVMLILSILLAMLSGYVL, LVQMMRVLLVVLSIPFLVILI, LAPVLWTVILILAAWGACKAA, APWLLGSMLGVAIVHVGGAAV, IIIVGFVSSVGLIAAMFLSAV, LTGISLITSVLAFAPGGIAEM, and FVVAVQVIRVILVIALLPPFY.

It belongs to the AbrB family.

The protein resides in the cell membrane. This is an uncharacterized protein from Bacillus subtilis (strain 168).